The following is a 940-amino-acid chain: Fibronectin-binding protein B (940 aa).

Residues 1–36 (MKSNLRYGIRKHKLGAASVFLGTMIVVGMGQEKEAA) form the signal peptide. The tract at residues 36-111 (AASEQNNTTV…PKVETSRVDL (76 aa)) is disordered. Residues 38-92 (SEQNNTTVEESGSSATESKASETQTTTNNVNTIDETQSYSATSTEQPSQSTQVTT) show a composition bias toward polar residues. The tract at residues 162–480 (TGTDVTNKVE…AQGDGKDKLK (319 aa)) is fibrinogen/elastin/tropoelastin-binding. Disordered regions lie at residues 676 to 746 (LGYE…NIID), 764 to 878 (IIEE…GKVV), and 892 to 918 (VPTKKAQSKKSELPETGGEESTNNGML). Residues 681-718 (GQNSGNQSFEEDTEEDKPKYEQGGNIVDIDFDSVPQIH) form a D-1 repeat. One copy of the D-2 repeat lies at 719–756 (GQNNGNQSFEEDTEKDKPKYEQGGNIIDIDFDSVPHIH). Residues 757-795 (GFNKHTEIIEEDTNKDKPNYQFGGHNSVDFEEDTLPQVS) form a D-3 repeat. Residues 764-774 (IIEEDTNKDKP) show a composition bias toward basic and acidic residues. Residues 792-802 (PQVSGHNEGQQ) are compositionally biased toward polar residues. The D-4; truncated repeat unit spans residues 796–814 (GHNEGQQTIEEDTTPPIVP). Residues 811 to 860 (PIVPPTPPTPEVPSEPETPTPPTPEVPSEPETPTPPTPEVPTEPGKPIPP) show a composition bias toward pro residues. 3 WR repeats span residues 815 to 828 (PTPPTPEVPSEPET), 829 to 842 (PTPPTPEVPSEPET), and 857 to 870 (PIPPAKEEPKKPSK). The LPXTG sorting signal signature appears at 904–908 (LPETG). Position 907 is a pentaglycyl murein peptidoglycan amidated threonine (Thr-907). Residues 908–940 (GGEESTNNGMLFGGLFSILGLALLRRNKKNHKA) constitute a propeptide, removed by sortase.

As to quaternary structure, interacts with host PLG; this interaction provides active plasmin on the surface of bacteria cells. Interacts with host histones.

The protein localises to the secreted. The protein resides in the cell wall. In terms of biological role, multifunctional protein which promotes bacterial attachment to fibrinogen, elastin and fibronectin. Also promotes the accumulation phase and the primary attachment phase of biofilm formation. In addition, protects against the antimicrobial activity of histones. Mechanistically, captures histones and prevents them from reaching the bacterial membrane and simultaneously binds plasminogen, thereby promoting its conversion to plasmin to destroy the bound histones. This Staphylococcus aureus (strain USA300) protein is Fibronectin-binding protein B.